The following is a 342-amino-acid chain: Endo-1,4-beta-xylanase A (342 aa).

In terms of domain architecture, GH10 spans 11 to 342 (EMLNLSLAKT…KEALYRILRF (332 aa)). Glu144 serves as the catalytic Proton donor. Glu252 acts as the Nucleophile in catalysis.

The protein belongs to the glycosyl hydrolase 10 (cellulase F) family. Cytoplasmic xylanase subfamily.

It is found in the cytoplasm. It carries out the reaction Endohydrolysis of (1-&gt;4)-beta-D-xylosidic linkages in xylans.. The protein operates within glycan degradation; xylan degradation. The polypeptide is Endo-1,4-beta-xylanase A (xynA) (Caldicellulosiruptor saccharolyticus (Caldocellum saccharolyticum)).